An 827-amino-acid polypeptide reads, in one-letter code: Probable beta-glucosidase H (827 aa).

The active site involves Asp-223. In terms of domain architecture, PA14 spans 387-546; sequence RLLTNAVMHF…DSAEMVRSAV (160 aa). N-linked (GlcNAc...) asparagine glycans are attached at residues Asn-471, Asn-594, Asn-600, and Asn-625.

Belongs to the glycosyl hydrolase 3 family.

It localises to the secreted. The catalysed reaction is Hydrolysis of terminal, non-reducing beta-D-glucosyl residues with release of beta-D-glucose.. It functions in the pathway glycan metabolism; cellulose degradation. Beta-glucosidases are one of a number of cellulolytic enzymes involved in the degradation of cellulosic biomass. Catalyzes the last step releasing glucose from the inhibitory cellobiose. This chain is Probable beta-glucosidase H (bglH), found in Aspergillus oryzae (strain ATCC 42149 / RIB 40) (Yellow koji mold).